We begin with the raw amino-acid sequence, 119 residues long: Large ribosomal subunit protein uL18 (119 aa).

The segment at 1-25 (MITKIDKNKVRKKRHARVRSKISGT) is disordered. Basic residues predominate over residues 9-20 (KVRKKRHARVRS).

The protein belongs to the universal ribosomal protein uL18 family. In terms of assembly, part of the 50S ribosomal subunit; part of the 5S rRNA/L5/L18/L25 subcomplex. Contacts the 5S and 23S rRNAs.

Its function is as follows. This is one of the proteins that bind and probably mediate the attachment of the 5S RNA into the large ribosomal subunit, where it forms part of the central protuberance. This is Large ribosomal subunit protein uL18 from Listeria monocytogenes serotype 4b (strain CLIP80459).